The primary structure comprises 283 residues: Acetyl-coenzyme A carboxylase carboxyl transferase subunit beta (283 aa).

In terms of domain architecture, CoA carboxyltransferase N-terminal spans 23–283 (LWIKCPSCSE…DFLMAGKAAA (261 aa)). Zn(2+)-binding residues include C27, C30, C46, and C49. The segment at 27–49 (CPSCSEMLFTKEYEDNLSVCPHC) adopts a C4-type zinc-finger fold.

This sequence belongs to the AccD/PCCB family. In terms of assembly, acetyl-CoA carboxylase is a heterohexamer composed of biotin carboxyl carrier protein (AccB), biotin carboxylase (AccC) and two subunits each of ACCase subunit alpha (AccA) and ACCase subunit beta (AccD). Zn(2+) is required as a cofactor.

The protein localises to the cytoplasm. It catalyses the reaction N(6)-carboxybiotinyl-L-lysyl-[protein] + acetyl-CoA = N(6)-biotinyl-L-lysyl-[protein] + malonyl-CoA. It participates in lipid metabolism; malonyl-CoA biosynthesis; malonyl-CoA from acetyl-CoA: step 1/1. In terms of biological role, component of the acetyl coenzyme A carboxylase (ACC) complex. Biotin carboxylase (BC) catalyzes the carboxylation of biotin on its carrier protein (BCCP) and then the CO(2) group is transferred by the transcarboxylase to acetyl-CoA to form malonyl-CoA. The sequence is that of Acetyl-coenzyme A carboxylase carboxyl transferase subunit beta from Novosphingobium aromaticivorans (strain ATCC 700278 / DSM 12444 / CCUG 56034 / CIP 105152 / NBRC 16084 / F199).